A 64-amino-acid chain; its full sequence is Large ribosomal subunit protein bL28 (64 aa).

The protein belongs to the bacterial ribosomal protein bL28 family.

The protein is Large ribosomal subunit protein bL28 of Campylobacter jejuni subsp. doylei (strain ATCC BAA-1458 / RM4099 / 269.97).